Reading from the N-terminus, the 246-residue chain is 2,3-bisphosphoglycerate-dependent phosphoglycerate mutase (246 aa).

Substrate-binding positions include 9–16 (RHGQSAWN), 22–23 (TG), R61, 88–91 (ERHY), K99, 115–116 (RR), and 181–182 (GN). The active-site Tele-phosphohistidine intermediate is the H10. The Proton donor/acceptor role is filled by E88.

The protein belongs to the phosphoglycerate mutase family. BPG-dependent PGAM subfamily.

The catalysed reaction is (2R)-2-phosphoglycerate = (2R)-3-phosphoglycerate. It functions in the pathway carbohydrate degradation; glycolysis; pyruvate from D-glyceraldehyde 3-phosphate: step 3/5. Its function is as follows. Catalyzes the interconversion of 2-phosphoglycerate and 3-phosphoglycerate. In Bifidobacterium longum (strain DJO10A), this protein is 2,3-bisphosphoglycerate-dependent phosphoglycerate mutase.